The sequence spans 171 residues: Large ribosomal subunit protein bL9 (171 aa).

The protein belongs to the bacterial ribosomal protein bL9 family.

In terms of biological role, binds to the 23S rRNA. The protein is Large ribosomal subunit protein bL9 of Rickettsia prowazekii (strain Madrid E).